Here is a 313-residue protein sequence, read N- to C-terminus: tRNA dimethylallyltransferase (313 aa).

Residue 10–17 (GPTASGKT) participates in ATP binding. Substrate is bound at residue 12–17 (TASGKT). 3 interaction with substrate tRNA regions span residues 35 to 38 (DSAM), 159 to 163 (QRIQR), and 240 to 245 (RCVGYR).

Belongs to the IPP transferase family. Monomer. Mg(2+) serves as cofactor.

The enzyme catalyses adenosine(37) in tRNA + dimethylallyl diphosphate = N(6)-dimethylallyladenosine(37) in tRNA + diphosphate. Its function is as follows. Catalyzes the transfer of a dimethylallyl group onto the adenine at position 37 in tRNAs that read codons beginning with uridine, leading to the formation of N6-(dimethylallyl)adenosine (i(6)A). The sequence is that of tRNA dimethylallyltransferase from Legionella pneumophila (strain Paris).